A 275-amino-acid chain; its full sequence is MRIALGLQYDGSPYAGWQTQLHQPTIQDELEKALTAFIGEEAKAFPVHTITAGRTDTGVHALGQVVHFDTNVGREDFSWVRGVNTFLPKSIVVNWAKEVPEEFSARFSAYERTYIYALHAGPCRSPIVNARAGYLMLPPDQFLDVEAMKKSAECLIGEHDFSSFRSSECQSKTPVKTIYAIDIISQEPWVYFRIRGNAFLHHMIRNIVGCFLQIGQGRQQSGWMAEVLTAKNRQIAAPTFMADGLYLAKIKYPEEFAIPQPWLENAWLPTNVIGK.

Asp-56 serves as the catalytic Nucleophile. Position 114 (Tyr-114) interacts with substrate.

It belongs to the tRNA pseudouridine synthase TruA family. Homodimer.

The catalysed reaction is uridine(38/39/40) in tRNA = pseudouridine(38/39/40) in tRNA. Functionally, formation of pseudouridine at positions 38, 39 and 40 in the anticodon stem and loop of transfer RNAs. This is tRNA pseudouridine synthase A from Polynucleobacter asymbioticus (strain DSM 18221 / CIP 109841 / QLW-P1DMWA-1) (Polynucleobacter necessarius subsp. asymbioticus).